Reading from the N-terminus, the 466-residue chain is Asparagine--tRNA ligase (466 aa).

This sequence belongs to the class-II aminoacyl-tRNA synthetase family. As to quaternary structure, homodimer.

Its subcellular location is the cytoplasm. The catalysed reaction is tRNA(Asn) + L-asparagine + ATP = L-asparaginyl-tRNA(Asn) + AMP + diphosphate + H(+). The chain is Asparagine--tRNA ligase from Shewanella sp. (strain ANA-3).